The chain runs to 507 residues: ATP synthase subunit alpha (507 aa).

An ATP-binding site is contributed by 170 to 177 (GDRQTGKT).

Belongs to the ATPase alpha/beta chains family. In terms of assembly, F-type ATPases have 2 components, CF(1) - the catalytic core - and CF(0) - the membrane proton channel. CF(1) has five subunits: alpha(3), beta(3), gamma(1), delta(1), epsilon(1). CF(0) has three main subunits: a(1), b(2) and c(9-12). The alpha and beta chains form an alternating ring which encloses part of the gamma chain. CF(1) is attached to CF(0) by a central stalk formed by the gamma and epsilon chains, while a peripheral stalk is formed by the delta and b chains.

Its subcellular location is the cell inner membrane. The enzyme catalyses ATP + H2O + 4 H(+)(in) = ADP + phosphate + 5 H(+)(out). Produces ATP from ADP in the presence of a proton gradient across the membrane. The alpha chain is a regulatory subunit. This Thermosipho melanesiensis (strain DSM 12029 / CIP 104789 / BI429) protein is ATP synthase subunit alpha.